A 150-amino-acid polypeptide reads, in one-letter code: Large ribosomal subunit protein eL19 (150 aa).

The interval 59–89 (SRYRARIRHEQKKKGRHRGPGSRKGKKTARM) is disordered. Residues 61–89 (YRARIRHEQKKKGRHRGPGSRKGKKTARM) are compositionally biased toward basic residues.

The protein belongs to the eukaryotic ribosomal protein eL19 family. Part of the 50S ribosomal subunit.

Functionally, binds to the 23S rRNA. The protein is Large ribosomal subunit protein eL19 of Pyrococcus horikoshii (strain ATCC 700860 / DSM 12428 / JCM 9974 / NBRC 100139 / OT-3).